Reading from the N-terminus, the 1356-residue chain is Vegetative incompatibility protein HET-E-1 (1356 aa).

One can recognise an NACHT domain in the interval 294–629 (RLLWINGDPG…DFLLGTASDK (336 aa)). Residue 300 to 307 (GDPGKGKT) coordinates GTP. 10 WD repeats span residues 839-869 (GHGS…KIWD), 881-911 (GHGG…KIWD), 923-953 (GHGG…KIWD), 965-995 (GHGS…KIWD), 1007-1037 (GHGG…KIWD), 1049-1079 (GHGG…KIWD), 1091-1121 (GHGD…KIWD), 1133-1163 (GHGG…KIWD), 1175-1205 (GHGG…KIWD), and 1217-1247 (GHGG…KIWD).

In terms of biological role, responsible for vegetative incompatibility through specific interactions with different alleles of the unlinked gene, het-c. This is Vegetative incompatibility protein HET-E-1 (HET-E1) from Podospora anserina (Pleurage anserina).